Here is an 890-residue protein sequence, read N- to C-terminus: Leucine--tRNA ligase (890 aa).

The 'HIGH' region motif lies at 48 to 58; that stretch reads PYPSGKLHMGH. Positions 645 to 649 match the 'KMSKS' region motif; it reads KMSKS. Residue K648 coordinates ATP.

Belongs to the class-I aminoacyl-tRNA synthetase family.

It localises to the cytoplasm. It carries out the reaction tRNA(Leu) + L-leucine + ATP = L-leucyl-tRNA(Leu) + AMP + diphosphate. This is Leucine--tRNA ligase from Polynucleobacter asymbioticus (strain DSM 18221 / CIP 109841 / QLW-P1DMWA-1) (Polynucleobacter necessarius subsp. asymbioticus).